Consider the following 397-residue polypeptide: Acetate kinase (397 aa).

Residue Asn8 coordinates Mg(2+). Lys15 is a binding site for ATP. Arg92 contributes to the substrate binding site. Residue Asp149 is the Proton donor/acceptor of the active site. Residues 209-213, 283-285, and 331-335 contribute to the ATP site; these read HLGNG, DFR, and GVGEN. Glu385 serves as a coordination point for Mg(2+).

It belongs to the acetokinase family. In terms of assembly, homodimer. Mg(2+) serves as cofactor. The cofactor is Mn(2+).

It localises to the cytoplasm. The enzyme catalyses acetate + ATP = acetyl phosphate + ADP. Its pathway is metabolic intermediate biosynthesis; acetyl-CoA biosynthesis; acetyl-CoA from acetate: step 1/2. Catalyzes the formation of acetyl phosphate from acetate and ATP. Can also catalyze the reverse reaction. This is Acetate kinase from Corynebacterium glutamicum (strain R).